We begin with the raw amino-acid sequence, 354 residues long: Period circadian protein (354 aa).

PAS domains are found at residues 1 to 55 (GIVM…VNGQ) and 133 to 235 (FVMR…HIIE). Positions 318–354 (IQDPDHSYYQRDSVMLGGISPHHDYNDSKSSTGTPLS) are disordered. Residues 345 to 354 (SKSSTGTPLS) are compositionally biased toward polar residues.

Forms a heterodimer with timeless (TIM); the complex then translocates into the nucleus. Post-translationally, phosphorylated with a circadian rhythmicity.

The protein resides in the nucleus. In terms of biological role, involved in the generation of biological rhythms. The biological cycle depends on the rhythmic formation and nuclear localization of the tim-per complex. Light induces the degradation of tim, which promotes elimination of per. Nuclear activity of the heterodimer coordinatively regulates per and tim transcription negative feedback loop. Behaves as a negative element in circadian transcriptional loop. Does not appear to bind DNA, suggesting indirect transcriptional inhibition. The polypeptide is Period circadian protein (per) (Manduca sexta (Tobacco hawkmoth)).